The primary structure comprises 372 residues: Peptide chain release factor 2 (372 aa).

An N5-methylglutamine modification is found at Gln-253.

The protein belongs to the prokaryotic/mitochondrial release factor family. Post-translationally, methylated by PrmC. Methylation increases the termination efficiency of RF2.

Its subcellular location is the cytoplasm. Its function is as follows. Peptide chain release factor 2 directs the termination of translation in response to the peptide chain termination codons UGA and UAA. This Mycolicibacterium gilvum (strain PYR-GCK) (Mycobacterium gilvum (strain PYR-GCK)) protein is Peptide chain release factor 2.